We begin with the raw amino-acid sequence, 395 residues long: MRN complex-interacting protein (395 aa).

Positions 90–100 (DPKSEQEEAHV) are enriched in basic and acidic residues. 2 disordered regions span residues 90–155 (DPKS…GGNC) and 180–275 (KRSS…FGES). Polar residues predominate over residues 104 to 113 (SKYTDQTTEG). Residues 117 to 127 (EKDDEDEDENV) show a composition bias toward acidic residues. A Nuclear localization signal (NLS) motif is present at residues 142–145 (RKKM). The segment covering 183–195 (SSSWNKGSVSKYS) has biased composition (low complexity). Polar residues-rich tracts occupy residues 224–244 (ACSS…QIKS) and 260–270 (QSESPSVSSHQ).

The protein belongs to the MRNIP family.

The protein localises to the nucleus. It is found in the nucleoplasm. Functionally, plays a role in the cellular response to DNA damage and the maintenance of genome stability through its association with the MRN damage-sensing complex. Promotes chromatin loading and activity of the MRN complex to facilitate subsequent ATM-mediated DNA damage response signaling and DNA repair. The protein is MRN complex-interacting protein of Danio rerio (Zebrafish).